Here is a 754-residue protein sequence, read N- to C-terminus: Nitrate reductase (754 aa).

A signal peptide (tat-type signal) is located at residues 1-31 (MKFTRRSFVKASALATAMVAAGCSPQPVAPK). The 57-residue stretch at 39–95 (ATWYKTVCRYCGVGCGVMVAAKDNRVVAVKGDTENPVNKGLLCVKGYYLDRIMNTEE) folds into the 4Fe-4S Mo/W bis-MGD-type domain. 4 residues coordinate [4Fe-4S] cluster: Cys-46, Cys-49, Cys-53, and Cys-81. Residues Lys-83, Gln-144, Asn-169, Cys-173, 256–258 (GTD), Met-341, Gln-345, Asn-451, Lys-497, Asp-524, 642–651 (TGRILEHWHT), Asn-728, and Lys-745 each bind Mo-bis(molybdopterin guanine dinucleotide).

It belongs to the prokaryotic molybdopterin-containing oxidoreductase family. NasA/NapA/NarB subfamily. As to quaternary structure, component of the nitrate reductase NapAB complex composed of NapA and NapB. [4Fe-4S] cluster serves as cofactor. The cofactor is Mo-bis(molybdopterin guanine dinucleotide). Post-translationally, predicted to be exported by the Tat system. The position of the signal peptide cleavage has not been experimentally proven.

The protein resides in the secreted. The catalysed reaction is 2 Fe(II)-[cytochrome] + nitrate + 2 H(+) = 2 Fe(III)-[cytochrome] + nitrite + H2O. Its function is as follows. Catalytic subunit of the nitrate reductase complex NapAB. Receives electrons from NapB and catalyzes the reduction of nitrate to nitrite. This Symbiobacterium thermophilum (strain DSM 24528 / JCM 14929 / IAM 14863 / T) protein is Nitrate reductase.